A 191-amino-acid polypeptide reads, in one-letter code: Large ribosomal subunit protein uL5 (191 aa).

Belongs to the universal ribosomal protein uL5 family. Part of the 50S ribosomal subunit; part of the 5S rRNA/L5/L18/L25 subcomplex. Contacts the 5S rRNA and the P site tRNA. Forms a bridge to the 30S subunit in the 70S ribosome.

This is one of the proteins that bind and probably mediate the attachment of the 5S RNA into the large ribosomal subunit, where it forms part of the central protuberance. In the 70S ribosome it contacts protein S13 of the 30S subunit (bridge B1b), connecting the 2 subunits; this bridge is implicated in subunit movement. Contacts the P site tRNA; the 5S rRNA and some of its associated proteins might help stabilize positioning of ribosome-bound tRNAs. In Micrococcus luteus (Micrococcus lysodeikticus), this protein is Large ribosomal subunit protein uL5.